Here is a 304-residue protein sequence, read N- to C-terminus: Dermonecrotic toxin LiSicTox-betaIA1i (304 aa).

The signal sequence occupies residues 1–21; that stretch reads MLLPAVISFIVYAVFLQEANG. Residues 22-26 constitute a propeptide that is removed on maturation; it reads HAAER. His-38 is an active-site residue. Mg(2+)-binding residues include Glu-58 and Asp-60. Residue His-74 is the Nucleophile of the active site. 2 disulfides stabilise this stretch: Cys-78/Cys-84 and Cys-80/Cys-223. Asp-118 contacts Mg(2+).

Belongs to the arthropod phospholipase D family. Class II subfamily. Class IIb sub-subfamily. The cofactor is Mg(2+). Expressed by the venom gland.

The protein localises to the secreted. The enzyme catalyses an N-(acyl)-sphingosylphosphocholine = an N-(acyl)-sphingosyl-1,3-cyclic phosphate + choline. It catalyses the reaction an N-(acyl)-sphingosylphosphoethanolamine = an N-(acyl)-sphingosyl-1,3-cyclic phosphate + ethanolamine. The catalysed reaction is a 1-acyl-sn-glycero-3-phosphocholine = a 1-acyl-sn-glycero-2,3-cyclic phosphate + choline. It carries out the reaction a 1-acyl-sn-glycero-3-phosphoethanolamine = a 1-acyl-sn-glycero-2,3-cyclic phosphate + ethanolamine. Its function is as follows. Dermonecrotic toxins cleave the phosphodiester linkage between the phosphate and headgroup of certain phospholipids (sphingolipid and lysolipid substrates), forming an alcohol (often choline) and a cyclic phosphate. This toxin acts on sphingomyelin (SM) with low activity. It may also act on ceramide phosphoethanolamine (CPE), lysophosphatidylcholine (LPC) and lysophosphatidylethanolamine (LPE), but not on lysophosphatidylserine (LPS), and lysophosphatidylglycerol (LPG). It acts by transphosphatidylation, releasing exclusively cyclic phosphate products as second products. Induces inflammatory response but no or very weak hemolysis, dermonecrosis, vascular permeability, edema, and cytotoxicity against renal epithelial cells. Causes swelling and erythema. In vivo, is not lethal to mice when intraperitoneally injected. This is Dermonecrotic toxin LiSicTox-betaIA1i from Loxosceles intermedia (Brown spider).